A 101-amino-acid chain; its full sequence is Small ribosomal subunit protein uS14 (101 aa).

Belongs to the universal ribosomal protein uS14 family. As to quaternary structure, part of the 30S ribosomal subunit. Contacts proteins S3 and S10.

Binds 16S rRNA, required for the assembly of 30S particles and may also be responsible for determining the conformation of the 16S rRNA at the A site. The sequence is that of Small ribosomal subunit protein uS14 from Novosphingobium aromaticivorans (strain ATCC 700278 / DSM 12444 / CCUG 56034 / CIP 105152 / NBRC 16084 / F199).